Here is a 146-residue protein sequence, read N- to C-terminus: 16.0 kDa heat shock protein, peroxisomal (146 aa).

In terms of domain architecture, sHSP spans 23-143; sequence WASASATAAM…RPRTRPIAVS (121 aa). The Microbody targeting signal motif lies at 144–146; that stretch reads SKL.

Belongs to the small heat shock protein (HSP20) family. As to quaternary structure, may form oligomeric structures.

It is found in the peroxisome. This is 16.0 kDa heat shock protein, peroxisomal (HSP16.0) from Oryza sativa subsp. japonica (Rice).